Reading from the N-terminus, the 188-residue chain is UPF0301 protein XC_1365 (188 aa).

It belongs to the UPF0301 (AlgH) family.

The polypeptide is UPF0301 protein XC_1365 (Xanthomonas campestris pv. campestris (strain 8004)).